The primary structure comprises 402 residues: MSRVSQARNLGKYFLLIDNMLVVLGFFVVFPLISIRFVDQMGWAAVMVGIALGLRQFIQQGLGIFGGAIADRFGAKPMIVTGMLMRAAGFATMGIAHEPWLLWFSCFLSGLGGTLFDPPRSALVVKLIRPEQRGRFFSLLMMQDSAGAVIGALLGSWLLQYDFRLVCATGAILFILCALFNAWLLPAWKLSTVRTPVREGMRRVMSDKRFVTYVLTLAGYYMLAVQVMLMLPIMVNDIAGSPAAVKWMYAIEACLSLTLLYPIARWSEKRFRLEHRLMAGLLVMSLSMIPIGMVGNLQQLFTLICAFYIGSVIAEPARETLSASLADARARGSYMGFSRLGLAIGGAIGYIGGGWLFDMGKALTQPELPWMMLGIIGFITFLALGWQFSHKRTPRRMLEPGA.

The Cytoplasmic portion of the chain corresponds to 1 to 12; it reads MSRVSQARNLGK. The helical transmembrane segment at 13–33 threads the bilayer; the sequence is YFLLIDNMLVVLGFFVVFPLI. Over 34–98 the chain is Periplasmic; sequence SIRFVDQMGW…GFATMGIAHE (65 aa). A helical membrane pass occupies residues 99-116; that stretch reads PWLLWFSCFLSGLGGTLF. Residues 117-138 are Cytoplasmic-facing; that stretch reads DPPRSALVVKLIRPEQRGRFFS. A helical transmembrane segment spans residues 139–159; it reads LLMMQDSAGAVIGALLGSWLL. Residues 160-164 lie on the Periplasmic side of the membrane; that stretch reads QYDFR. The chain crosses the membrane as a helical span at residues 165 to 185; sequence LVCATGAILFILCALFNAWLL. At 186–213 the chain is on the cytoplasmic side; that stretch reads PAWKLSTVRTPVREGMRRVMSDKRFVTY. Residues 214–234 traverse the membrane as a helical segment; it reads VLTLAGYYMLAVQVMLMLPIM. The Periplasmic segment spans residues 235–243; that stretch reads VNDIAGSPA. The helical transmembrane segment at 244–264 threads the bilayer; sequence AVKWMYAIEACLSLTLLYPIA. Topologically, residues 265–276 are cytoplasmic; the sequence is RWSEKRFRLEHR. The chain crosses the membrane as a helical span at residues 277-297; the sequence is LMAGLLVMSLSMIPIGMVGNL. Over 298–299 the chain is Periplasmic; the sequence is QQ. The chain crosses the membrane as a helical span at residues 300-320; sequence LFTLICAFYIGSVIAEPARET. At 321–339 the chain is on the cytoplasmic side; it reads LSASLADARARGSYMGFSR. Residues 340 to 360 traverse the membrane as a helical segment; the sequence is LGLAIGGAIGYIGGGWLFDMG. Over 361-367 the chain is Periplasmic; the sequence is KALTQPE. Residues 368–388 traverse the membrane as a helical segment; the sequence is LPWMMLGIIGFITFLALGWQF. The Cytoplasmic portion of the chain corresponds to 389 to 402; it reads SHKRTPRRMLEPGA.

Belongs to the major facilitator superfamily. DHA1 family. MdtH (TC 2.A.1.2.21) subfamily.

Its subcellular location is the cell inner membrane. The sequence is that of Multidrug resistance protein MdtH from Salmonella paratyphi B (strain ATCC BAA-1250 / SPB7).